Reading from the N-terminus, the 313-residue chain is Homoserine kinase (313 aa).

Residue 92–102 (PPGRGLGSSGA) participates in ATP binding.

The protein belongs to the GHMP kinase family. Homoserine kinase subfamily.

The protein resides in the cytoplasm. It carries out the reaction L-homoserine + ATP = O-phospho-L-homoserine + ADP + H(+). It participates in amino-acid biosynthesis; L-threonine biosynthesis; L-threonine from L-aspartate: step 4/5. Catalyzes the ATP-dependent phosphorylation of L-homoserine to L-homoserine phosphate. This Aeropyrum pernix (strain ATCC 700893 / DSM 11879 / JCM 9820 / NBRC 100138 / K1) protein is Homoserine kinase.